Reading from the N-terminus, the 39-residue chain is Photosystem II reaction center protein L (39 aa).

A helical transmembrane segment spans residues 18-38; that stretch reads SLYLGLLLVFVLGILFSSYFF.

The protein belongs to the PsbL family. As to quaternary structure, PSII is composed of 1 copy each of membrane proteins PsbA, PsbB, PsbC, PsbD, PsbE, PsbF, PsbH, PsbI, PsbJ, PsbK, PsbL, PsbM, PsbT, PsbX, PsbY, Psb30/Ycf12, peripheral proteins PsbO, CyanoQ (PsbQ), PsbU, PsbV and a large number of cofactors. It forms dimeric complexes.

The protein resides in the cellular thylakoid membrane. Its function is as follows. One of the components of the core complex of photosystem II (PSII). PSII is a light-driven water:plastoquinone oxidoreductase that uses light energy to abstract electrons from H(2)O, generating O(2) and a proton gradient subsequently used for ATP formation. It consists of a core antenna complex that captures photons, and an electron transfer chain that converts photonic excitation into a charge separation. This subunit is found at the monomer-monomer interface and is required for correct PSII assembly and/or dimerization. This is Photosystem II reaction center protein L from Prochlorococcus marinus (strain SARG / CCMP1375 / SS120).